Consider the following 106-residue polypeptide: Urease subunit beta (106 aa).

The protein belongs to the urease beta subunit family. In terms of assembly, heterotrimer of UreA (gamma), UreB (beta) and UreC (alpha) subunits. Three heterotrimers associate to form the active enzyme.

It localises to the cytoplasm. It catalyses the reaction urea + 2 H2O + H(+) = hydrogencarbonate + 2 NH4(+). It functions in the pathway nitrogen metabolism; urea degradation; CO(2) and NH(3) from urea (urease route): step 1/1. In Prochlorococcus marinus (strain MIT 9301), this protein is Urease subunit beta.